The following is a 717-amino-acid chain: Fatty acid oxidation complex subunit alpha (717 aa).

Residues Met-1–Ala-190 are enoyl-CoA hydratase/isomerase. Position 298 (Asp-298) interacts with substrate. Residues His-313–Gly-717 are 3-hydroxyacyl-CoA dehydrogenase. NAD(+)-binding positions include Met-326, Asp-345, Val-402–Glu-404, Lys-409, and Ser-431. His-452 acts as the For 3-hydroxyacyl-CoA dehydrogenase activity in catalysis. Asn-455 contributes to the NAD(+) binding site. Position 502 (Asn-502) interacts with substrate.

This sequence in the N-terminal section; belongs to the enoyl-CoA hydratase/isomerase family. The protein in the C-terminal section; belongs to the 3-hydroxyacyl-CoA dehydrogenase family. Heterotetramer of two alpha chains (FadB) and two beta chains (FadA).

The catalysed reaction is a (3S)-3-hydroxyacyl-CoA + NAD(+) = a 3-oxoacyl-CoA + NADH + H(+). It carries out the reaction a (3S)-3-hydroxyacyl-CoA = a (2E)-enoyl-CoA + H2O. The enzyme catalyses a 4-saturated-(3S)-3-hydroxyacyl-CoA = a (3E)-enoyl-CoA + H2O. It catalyses the reaction (3S)-3-hydroxybutanoyl-CoA = (3R)-3-hydroxybutanoyl-CoA. The catalysed reaction is a (3Z)-enoyl-CoA = a 4-saturated (2E)-enoyl-CoA. It carries out the reaction a (3E)-enoyl-CoA = a 4-saturated (2E)-enoyl-CoA. It participates in lipid metabolism; fatty acid beta-oxidation. Its function is as follows. Involved in the aerobic and anaerobic degradation of long-chain fatty acids via beta-oxidation cycle. Catalyzes the formation of 3-oxoacyl-CoA from enoyl-CoA via L-3-hydroxyacyl-CoA. It can also use D-3-hydroxyacyl-CoA and cis-3-enoyl-CoA as substrate. The protein is Fatty acid oxidation complex subunit alpha of Acinetobacter baumannii (strain SDF).